The primary structure comprises 102 residues: Co-chaperonin GroES (102 aa).

It belongs to the GroES chaperonin family. As to quaternary structure, heptamer of 7 subunits arranged in a ring. Interacts with the chaperonin GroEL.

Its subcellular location is the cytoplasm. Together with the chaperonin GroEL, plays an essential role in assisting protein folding. The GroEL-GroES system forms a nano-cage that allows encapsulation of the non-native substrate proteins and provides a physical environment optimized to promote and accelerate protein folding. GroES binds to the apical surface of the GroEL ring, thereby capping the opening of the GroEL channel. The chain is Co-chaperonin GroES from Streptomyces albus G.